A 613-amino-acid chain; its full sequence is Pescadillo homolog (613 aa).

A coiled-coil region spans residues 259–344; sequence KELSNELETK…MKQIEHDIIX (86 aa). The segment at 268 to 333 is disordered; that stretch reads KESTEDNIIE…KNDQKNDQKN (66 aa). Residues 278–333 are compositionally biased toward basic and acidic residues; the sequence is ENEKKTKNGKTENCEKNDQENEKKTKNDKTKNCEKNDQKNDQKNDQKNDQKNDQKN. The BRCT domain occupies 350-453; sequence SVKNLFKNHI…MILSCEDYNI (104 aa). Positions 485-517 are disordered; sequence LSEDPQYNKSIQKNKTNSENKXNNYNDNENDMS. Residues 492-601 are a coiled coil; that stretch reads NKSIQKNKTN…ENRQKLTIEK (110 aa). Over residues 497–511 the composition is skewed to low complexity; the sequence is KNKTNSENKXNNYND.

Belongs to the pescadillo family.

The protein localises to the nucleus. It is found in the nucleolus. The protein resides in the nucleoplasm. Its function is as follows. Required for maturation of ribosomal RNAs and formation of the large ribosomal subunit. This is Pescadillo homolog from Plasmodium yoelii yoelii.